A 333-amino-acid chain; its full sequence is C4-dicarboxylate-binding periplasmic protein DctP (333 aa).

A signal peptide spans 1–26 (MLTRRILGALVGATALSLALSVPALA).

Belongs to the bacterial solute-binding protein 7 family. The complex comprises the extracytoplasmic solute receptor protein DctP, and the two transmembrane proteins DctQ and DctM.

The protein localises to the periplasm. Part of the tripartite ATP-independent periplasmic (TRAP) transport system DctPQM involved in C4-dicarboxylates uptake. Binds C4-dicarboxylates such as fumarate, succinate, L-malate and D-malate. The sequence is that of C4-dicarboxylate-binding periplasmic protein DctP from Rhodobacter capsulatus (Rhodopseudomonas capsulata).